Reading from the N-terminus, the 671-residue chain is MSEFQLVTRFEPAGDQPEAIRQLVEGIDAGLAHQTLLGVTGSGKTFSIANVISQIKRPTLVLAPNKTLAAQLYGEFKAFFPNNAVEYFVSYYDYYQPEAYVPSSDTFIEKDASINDHIEQMRLSATKALLERKDAIIVTTVSCIYGLGSPETYLRMVLHVDRGDKLDQRALLRRLADLQYTRNDMDFARATFRVRGDVIDIYPAESDLEAIRIELFDDEVESLSAFDPLTGEVIRKLPRFTFYPKSHYVTPRETLVEAMEGIKVELQERLEYLRSQNKLVEAQRLEQRTRFDLEMMLELGYCNGIENYSRYLSGRPSGAPPPTLFDYLPADALLVIDESHVSVPQVGAMYKGDRSRKETLVEYGFRLPSALDNRPMRFDEWEAISPQTIFVSATPGNYEAEHAGRIVEQVVRPTGLVDPQIEIRPALTQVDDLLSEIHKRAALEERVLVTTLTKRMSEDLTDYLSDHGVRVRYLHSDIDTVERVEIIRDLRLGTFDVLVGINLLREGLDMPEVSLVAILDADKEGFLRSDRSLIQTIGRAARNLNGRAILYADRITGSMERAIGETERRREKQIAFNLEHGITPKGVFKDVADIMEGATVPGSRSKKRKGMAKAAEESARYENELRSPSEINKRIRQLEEKMYQLARDLEFEAAAQMRDEIGKLRERLLAV.

The 388-residue stretch at 25 to 412 (EGIDAGLAHQ…AGRIVEQVVR (388 aa)) folds into the Helicase ATP-binding domain. 38–45 (GVTGSGKT) serves as a coordination point for ATP. Positions 91-114 (YYDYYQPEAYVPSSDTFIEKDASI) match the Beta-hairpin motif. Residues 429-582 (QVDDLLSEIH…QIAFNLEHGI (154 aa)) form the Helicase C-terminal domain. The interval 601–625 (PGSRSKKRKGMAKAAEESARYENEL) is disordered. Positions 614–625 (AAEESARYENEL) are enriched in basic and acidic residues. One can recognise a UVR domain in the interval 632-667 (NKRIRQLEEKMYQLARDLEFEAAAQMRDEIGKLRER).

It belongs to the UvrB family. Forms a heterotetramer with UvrA during the search for lesions. Interacts with UvrC in an incision complex.

The protein resides in the cytoplasm. The UvrABC repair system catalyzes the recognition and processing of DNA lesions. A damage recognition complex composed of 2 UvrA and 2 UvrB subunits scans DNA for abnormalities. Upon binding of the UvrA(2)B(2) complex to a putative damaged site, the DNA wraps around one UvrB monomer. DNA wrap is dependent on ATP binding by UvrB and probably causes local melting of the DNA helix, facilitating insertion of UvrB beta-hairpin between the DNA strands. Then UvrB probes one DNA strand for the presence of a lesion. If a lesion is found the UvrA subunits dissociate and the UvrB-DNA preincision complex is formed. This complex is subsequently bound by UvrC and the second UvrB is released. If no lesion is found, the DNA wraps around the other UvrB subunit that will check the other stand for damage. The chain is UvrABC system protein B from Pseudomonas syringae pv. tomato (strain ATCC BAA-871 / DC3000).